A 241-amino-acid chain; its full sequence is Demethylmenaquinone methyltransferase (241 aa).

Residues threonine 73 and aspartate 92 each coordinate S-adenosyl-L-methionine.

This sequence belongs to the class I-like SAM-binding methyltransferase superfamily. MenG/UbiE family.

The enzyme catalyses a 2-demethylmenaquinol + S-adenosyl-L-methionine = a menaquinol + S-adenosyl-L-homocysteine + H(+). The protein operates within quinol/quinone metabolism; menaquinone biosynthesis; menaquinol from 1,4-dihydroxy-2-naphthoate: step 2/2. Methyltransferase required for the conversion of demethylmenaquinol (DMKH2) to menaquinol (MKH2). The protein is Demethylmenaquinone methyltransferase of Chlorobaculum parvum (strain DSM 263 / NCIMB 8327) (Chlorobium vibrioforme subsp. thiosulfatophilum).